A 445-amino-acid polypeptide reads, in one-letter code: T-box transcription factor TBX20 (445 aa).

Residues Leu-108–Asp-287 constitute a DNA-binding region (T-box). The disordered stretch occupies residues Glu-318–Thr-337. Positions Glu-325–Thr-337 are enriched in polar residues.

Prominently expressed in the extraembryonic mesoderm, developing heart, eye analage and motor neurons of hindbrain and spinal cord. Expressed in extraembryonic tissues such as the amnion and allantois.

It is found in the nucleus. In terms of biological role, acts as a transcriptional activator and repressor required for cardiac development and may have key roles in the maintenance of functional and structural phenotypes in adult heart. The sequence is that of T-box transcription factor TBX20 (Tbx20) from Mus musculus (Mouse).